The primary structure comprises 96 residues: RNA-binding protein Hfq (96 aa).

Residues D9–V68 form the Sm domain.

The protein belongs to the Hfq family. Homohexamer.

In terms of biological role, RNA chaperone that binds small regulatory RNA (sRNAs) and mRNAs to facilitate mRNA translational regulation in response to envelope stress, environmental stress and changes in metabolite concentrations. Also binds with high specificity to tRNAs. This Histophilus somni (strain 129Pt) (Haemophilus somnus) protein is RNA-binding protein Hfq.